The primary structure comprises 409 residues: Failed axon connections homolog (409 aa).

Residues 68-88 traverse the membrane as a helical segment; the sequence is YLTGGALLAAAAYLLHELLVI. Positions 372-409 are disordered; the sequence is DEGAENSFSRTPDTDFTGHSLFDSDVDMDDYTDHEQCK.

It belongs to the FAX family.

It localises to the membrane. In terms of biological role, may play a role in axonal development. The polypeptide is Failed axon connections homolog (FAXC) (Homo sapiens (Human)).